The sequence spans 186 residues: MKEHEITRQAREHFQKTINTMSDQLSTVRASRVSPAILEPVTVEYEGAKYKLSELAMVVAQDARTLIIEPWDVSMIPAISRSLQKANVGANPSDDGKRIKLVFPSLSQERREELARLVDKYLEEARIALRNIRREYIDEVKSKEKKKELSEDESRRIQNELQKAFEEYEKQMEQICQRKRKEIMEE.

It belongs to the RRF family.

The protein localises to the cytoplasm. Responsible for the release of ribosomes from messenger RNA at the termination of protein biosynthesis. May increase the efficiency of translation by recycling ribosomes from one round of translation to another. This chain is Ribosome-recycling factor, found in Coprothermobacter proteolyticus (strain ATCC 35245 / DSM 5265 / OCM 4 / BT).